The sequence spans 476 residues: MSAVPWIIKYRPKRVEDVIDQEKAKEVLIPWIKKWLSGTPPEKRAALLWGPPGVGKTSLVEAICNEFNLEKIEMNASDFRRKGDIERVAIAAATKKPLPPWKGRLILLDEVDGLSPRGDEGAVAAILELIKKTKNPIVMTANDPWGTHLRPIREESLLVEFKRIPKTKAREFLLKICEKEGVYCEKEAVDYIIEKNKGDLRASINDLQSIAEAYGKVTLDLASALLVERDRVLTPWEMLQSLFYSKYSWQARKAVTSTDLDYDTLFLWIAENVPKQYGDDPYDLWRGMEAVSRADVIYGRIRRTMNWSLLPYFFNALGPGVALAKTKYHKRARWSYPEKIVLLARTKEERRVRDELASHLALLTHSSKSYVRREIIPMLQFIAQVNPNYFARLALGLRLSDPMIKYLAKSKYQLVKKYVEELKSSRTVKAEEQTKAKEVVKELKKEYEKGTKKGKGEKRRKGSDEGSGLLKWLKKD.

An ATP-binding site is contributed by 50–57 (GPPGVGKT). The interval 447–476 (YEKGTKKGKGEKRRKGSDEGSGLLKWLKKD) is disordered. The segment covering 452–461 (KKGKGEKRRK) has biased composition (basic residues).

Belongs to the activator 1 small subunits family. RfcL subfamily. In terms of assembly, heteromultimer composed of small subunits (RfcS) and large subunits (RfcL).

Part of the RFC clamp loader complex which loads the PCNA sliding clamp onto DNA. This chain is Replication factor C large subunit, found in Ignicoccus hospitalis (strain KIN4/I / DSM 18386 / JCM 14125).